A 109-amino-acid chain; its full sequence is MFGKGGLGNLMKQAQQMQEKMQKMQEEIAQLEVTGESGAGLVKVTINGAHNCRRVEIDPSLLEDDKEMLEDLVAAAFNDAARRIEETQKEKMASVSSGMQLPPGFKMPF.

The protein belongs to the YbaB/EbfC family. Homodimer.

The protein localises to the cytoplasm. Its subcellular location is the nucleoid. In terms of biological role, binds to DNA and alters its conformation. May be involved in regulation of gene expression, nucleoid organization and DNA protection. The polypeptide is Nucleoid-associated protein YbaB (Escherichia coli O127:H6 (strain E2348/69 / EPEC)).